Reading from the N-terminus, the 50-residue chain is MPREGLTLRCETCKMENYITKKNKKLHPDKMEVTKYCPKCNQHTNHKEKK.

Belongs to the bacterial ribosomal protein bL33 family.

This is Large ribosomal subunit protein bL33B from Metamycoplasma arthritidis (strain 158L3-1) (Mycoplasma arthritidis).